The chain runs to 265 residues: MIKWPWKAQEITQNEDWPWDDALAIPLLVNLTAQEQARLIALAERFLQQKRLVALQGFELDSLKSARIALIFCLPILELGIEWLDGFHEVLIYPAPFVVDDEWEDDIGLVHSQRVVQSGQSWQQGPIILNWLDTQDSFDASGFNLIIHEVAHKLDMRNGDRASGIPFIPLRDVAGWEHDLHAAMNNIQDEIDLVGESAASIDAYAATDPAECFAVLSEYFFSAPELFAPRFPALWQRFCQFYRQDPSQRLRVSAAEGDYGEESEH.

Zn(2+) is bound by residues histidine 111, histidine 148, histidine 152, and glutamate 211.

Belongs to the MtfA family. As to quaternary structure, interacts with Mlc. Zn(2+) is required as a cofactor.

It localises to the cytoplasm. Functionally, involved in the modulation of the activity of the glucose-phosphotransferase system (glucose-PTS). Interacts with the transcriptional repressor Mlc, preventing its interaction with DNA and leading to the modulation of expression of genes regulated by Mlc, including ptsG, which encodes the PTS system glucose-specific EIICB component. Shows zinc-dependent metallopeptidase activity. The polypeptide is Mlc titration factor A (Salmonella typhi).